The primary structure comprises 269 residues: Tryptophan synthase alpha chain (269 aa).

Catalysis depends on proton acceptor residues Glu-49 and Asp-60.

This sequence belongs to the TrpA family. As to quaternary structure, tetramer of two alpha and two beta chains.

The catalysed reaction is (1S,2R)-1-C-(indol-3-yl)glycerol 3-phosphate + L-serine = D-glyceraldehyde 3-phosphate + L-tryptophan + H2O. It functions in the pathway amino-acid biosynthesis; L-tryptophan biosynthesis; L-tryptophan from chorismate: step 5/5. The alpha subunit is responsible for the aldol cleavage of indoleglycerol phosphate to indole and glyceraldehyde 3-phosphate. The sequence is that of Tryptophan synthase alpha chain from Enterobacter sp. (strain 638).